The sequence spans 229 residues: Probable GTP-binding protein EngB (229 aa).

An EngB-type G domain is found at 53-228; that stretch reads DLPEVAFAGR…RAEIVRLCID (176 aa). GTP-binding positions include 61-68, 88-92, 106-109, 173-176, and 207-209; these read GRSNVGKS, GRTRE, DLPG, TKAD, and TSS. Serine 68 and threonine 90 together coordinate Mg(2+).

Belongs to the TRAFAC class TrmE-Era-EngA-EngB-Septin-like GTPase superfamily. EngB GTPase family. The cofactor is Mg(2+).

Its function is as follows. Necessary for normal cell division and for the maintenance of normal septation. The chain is Probable GTP-binding protein EngB from Caulobacter vibrioides (strain NA1000 / CB15N) (Caulobacter crescentus).